Consider the following 231-residue polypeptide: U1 small nuclear ribonucleoprotein C (231 aa).

A Matrin-type zinc finger spans residues 4–36 (YYCEYCHSYLTHDTLSVRKSHLVGKNHLRITAD). Basic residues predominate over residues 49 to 61 (HNHKRRHIGKRGR). 3 disordered regions span residues 49-71 (HNHK…SQNE), 137-177 (PQRA…LEPP), and 205-231 (ESKK…RYGN).

It belongs to the U1 small nuclear ribonucleoprotein C family. In terms of assembly, U1 snRNP is composed of the 7 core Sm proteins SMB1, SMD1, SMD2, SMD3, SME1, SMX3 and SMX2 (Sm proteins B, D1, D2, D3, E, F and G, respectively) that assemble in a heptameric protein ring on the Sm site of the small nuclear RNA to form the core snRNP, and at least 10 U1 snRNP-specific proteins SNP1/U1-70K, MUD1/U1-A, YHC1/U1-C, LUC7, NAM8, PRP39, PRP40, PRP42, SNU56 and SNU71. YHC1/U1-C interacts with U1 snRNA and the 5' splice-site region of the pre-mRNA.

Its subcellular location is the nucleus. Its function is as follows. Component of the spliceosomal U1 snRNP, which is essential for recognition of the pre-mRNA 5' splice-site and the subsequent assembly of the spliceosome. YHC1/U1-C is directly involved in initial 5' splice-site recognition for both constitutive and regulated alternative splicing. The interaction with the 5' splice-site seems to precede base-pairing between the pre-mRNA and the U1 snRNA. Stimulates commitment or early (E) complex formation by stabilizing the base pairing of the 5' end of the U1 snRNA and the 5' splice-site region. This chain is U1 small nuclear ribonucleoprotein C, found in Saccharomyces cerevisiae (strain ATCC 204508 / S288c) (Baker's yeast).